Consider the following 511-residue polypeptide: Bifunctional purine biosynthesis protein PurH (511 aa).

One can recognise an MGS-like domain in the interval 1 to 145 (MKKRALVSVS…KNHKFVSVIV (145 aa)).

This sequence belongs to the PurH family.

It carries out the reaction (6R)-10-formyltetrahydrofolate + 5-amino-1-(5-phospho-beta-D-ribosyl)imidazole-4-carboxamide = 5-formamido-1-(5-phospho-D-ribosyl)imidazole-4-carboxamide + (6S)-5,6,7,8-tetrahydrofolate. The enzyme catalyses IMP + H2O = 5-formamido-1-(5-phospho-D-ribosyl)imidazole-4-carboxamide. Its pathway is purine metabolism; IMP biosynthesis via de novo pathway; 5-formamido-1-(5-phospho-D-ribosyl)imidazole-4-carboxamide from 5-amino-1-(5-phospho-D-ribosyl)imidazole-4-carboxamide (10-formyl THF route): step 1/1. The protein operates within purine metabolism; IMP biosynthesis via de novo pathway; IMP from 5-formamido-1-(5-phospho-D-ribosyl)imidazole-4-carboxamide: step 1/1. The polypeptide is Bifunctional purine biosynthesis protein PurH (Bacillus cereus (strain ATCC 10987 / NRS 248)).